Reading from the N-terminus, the 491-residue chain is MILLTLLYLIIFYIIIDFIKKNYKTKNQLPSPLGIALPIIGHLHLLRTDPYKTLAKASKKTEHGILKCWNGEHLMVVVDNPSIIKQMYVNTNNFTDRPQTKVFEIISRNYKNSGFANGEKWKHLRGLYAPSFTKIKSRPHENIILKYVNFEIKSLKNHAITNSIYNPFLIENINSFGTKVITEIIFGREFSENEVYSLIGPMNKLFGILDTPFPSESISFLKPFYRRSYKECDKQCEELFKLVEKVYDDHLLNLDKDNPKDVMDVMIVETDFKEKDHVICICCDLLMGTKDTFNTIVLWFFVLMINYQDVQLKGYQEIIKVLECTGRDHVTIEDIDKLPYIDGIIKEISRIHPAGPLSVPRTAINDIMINGYFIPKGCHVFQNTYGAVYNYMKESDEPCKMKPERWIENEKLRKDGKLDPTNDLALISLPFSSGIRNCPGVGFAEYELFLLFSNIILNFHLSSPNNLKLNESGHFGLTMKPFPFLVDLKLR.

Residues 1–21 (MILLTLLYLIIFYIIIDFIKK) traverse the membrane as a helical segment. Cys438 serves as a coordination point for heme.

Belongs to the cytochrome P450 family. Heme is required as a cofactor.

It is found in the membrane. It carries out the reaction discoidol + reduced [NADPH--hemoprotein reductase] + O2 = discodiene + acetone + oxidized [NADPH--hemoprotein reductase] + 2 H2O + H(+). It participates in sesquiterpene biosynthesis. Its function is as follows. Cytochrome P450 monooxygenase; part of the gene cluster that mediates the biosynthesis of the trisnorsesquiterpene discodiene which has a function during later stages of multicellular development, during the transition from fingers to Mexican hats. The terpene synthase tps8 converts its substrate farnesyl diphosphate (FDP) into the bicyclic sesquiterpene alcohol discoidol. The cytochrome P450 monooxygenase cyp521A1 then catalyzes the oxidative degradation of discoidol to form the trisnorsesquiterpene discodiene. The sequence is that of Cytochrome P450 monooxygenase 521A1 (cyp521A1) from Dictyostelium discoideum (Social amoeba).